The chain runs to 67 residues: ATP synthase subunit c (67 aa).

The next 2 helical transmembrane spans lie at 6–26 (ILAL…LVAN) and 46–66 (IMGV…TFFV).

The protein belongs to the ATPase C chain family. In terms of assembly, F-type ATPases have 2 components, F(1) - the catalytic core - and F(0) - the membrane proton channel. F(1) has five subunits: alpha(3), beta(3), gamma(1), delta(1), epsilon(1). F(0) has three main subunits: a(1), b(2) and c(10-14). The alpha and beta chains form an alternating ring which encloses part of the gamma chain. F(1) is attached to F(0) by a central stalk formed by the gamma and epsilon chains, while a peripheral stalk is formed by the delta and b chains.

The protein localises to the cell membrane. F(1)F(0) ATP synthase produces ATP from ADP in the presence of a proton or sodium gradient. F-type ATPases consist of two structural domains, F(1) containing the extramembraneous catalytic core and F(0) containing the membrane proton channel, linked together by a central stalk and a peripheral stalk. During catalysis, ATP synthesis in the catalytic domain of F(1) is coupled via a rotary mechanism of the central stalk subunits to proton translocation. Functionally, key component of the F(0) channel; it plays a direct role in translocation across the membrane. A homomeric c-ring of between 10-14 subunits forms the central stalk rotor element with the F(1) delta and epsilon subunits. The polypeptide is ATP synthase subunit c (Streptococcus mutans serotype c (strain ATCC 700610 / UA159)).